The sequence spans 142 residues: Acetyltransferase SG1711 (142 aa).

The N-acetyltransferase domain maps to 1–142 (MEIRVFRHDD…GKRLIEDQEY (142 aa)).

Belongs to the acetyltransferase family. YpeA subfamily.

In Sodalis glossinidius (strain morsitans), this protein is Acetyltransferase SG1711.